We begin with the raw amino-acid sequence, 717 residues long: Polyribonucleotide nucleotidyltransferase (717 aa).

Positions 488 and 494 each coordinate Mg(2+). The 60-residue stretch at 555–614 (PRIEVMNIPVDKIREVIGSGGKVIREIVEKTGAKINIEDDGTVKIASSSGKEIEAARKWI) folds into the KH domain. Positions 624–692 (GQIYEGTVVK…ERGKVRLSMK (69 aa)) constitute an S1 motif domain.

This sequence belongs to the polyribonucleotide nucleotidyltransferase family. The cofactor is Mg(2+).

Its subcellular location is the cytoplasm. The enzyme catalyses RNA(n+1) + phosphate = RNA(n) + a ribonucleoside 5'-diphosphate. Its function is as follows. Involved in mRNA degradation. Catalyzes the phosphorolysis of single-stranded polyribonucleotides processively in the 3'- to 5'-direction. This Sinorhizobium fredii (strain NBRC 101917 / NGR234) protein is Polyribonucleotide nucleotidyltransferase.